We begin with the raw amino-acid sequence, 460 residues long: Transcription factor TGA10 (460 aa).

Over residues 1–11 (MQGHHQNHHQH) the composition is skewed to basic residues. Disordered regions lie at residues 1–29 (MQGH…NKDG) and 43–163 (LDGQ…PKTL). Low complexity predominate over residues 12 to 21 (LSSSSATSSH). 2 stretches are compositionally biased toward polar residues: residues 65 to 81 (TQNL…NIFP) and 121 to 136 (DLTN…QGSK). Residues 138 to 162 (IKKEGNRKGLASSDHDIPKSSDPKT) show a composition bias toward basic and acidic residues. A bZIP domain is found at 159–203 (DPKTLRRLAQNREAARKSRLRKKAYVQQLESCRIKLTQLEQEIQR). Residues 161–181 (KTLRRLAQNREAARKSRLRKK) form a basic motif region. Residues 163 to 170 (LRRLAQNR) carry the Nuclear localization signal motif. Residues 187–201 (LESCRIKLTQLEQEI) are leucine-zipper. Residues 236-455 (AAVFDMEYAR…QALSSLWLAR (220 aa)) form the DOG1 domain.

It belongs to the bZIP family. Homodimer. Binds DNA as a dimer. Interacts with floral glutaredoxins GRXC7/ROXY1 and GRXC8/ROXY2 in the nucleus. Interacts with TGA1, TGA2, TGA3, TGA4, TGA5, TGA6, TGA7, TGA9 and PAN. As to expression, expressed at low levels in inflorescence apex and flowers.

Its subcellular location is the nucleus. Functionally, together with TGA9, basic leucine-zipper transcription factor required for anther development, probably via the activation of SPL expression in anthers and via the regulation of genes with functions in early and middle tapetal development. Required for signaling responses to pathogen-associated molecular patterns (PAMPs) such as flg22 that involves chloroplastic reactive oxygen species (ROS) production and subsequent expression of H(2)O(2)-responsive genes. In Arabidopsis thaliana (Mouse-ear cress), this protein is Transcription factor TGA10.